A 1072-amino-acid polypeptide reads, in one-letter code: Carbamoyl phosphate synthase large chain (1072 aa).

The segment at 1-401 (MPKRLDINTI…SLLKAVRSLE (401 aa)) is carboxyphosphate synthetic domain. Residues Arg129, Arg169, Gly175, Gly176, Lys208, Ile210, Glu215, Gly241, Val242, His243, Gln284, and Glu298 each coordinate ATP. In terms of domain architecture, ATP-grasp 1 spans 133–327 (RTLMQDLNEP…IAKLAAKIAV (195 aa)). Residues Gln284, Glu298, and Asn300 each contribute to the Mg(2+) site. Mn(2+) contacts are provided by Gln284, Glu298, and Asn300. Residues 402-546 (LGIYHLELDH…YSTYADENES (145 aa)) form an oligomerization domain region. The interval 547–929 (IVTDRKSVVV…ALYKGLVASG (383 aa)) is carbamoyl phosphate synthetic domain. One can recognise an ATP-grasp 2 domain in the interval 671–861 (EAALTKLGIP…MANVATKVIL (191 aa)). Residues Arg707, Arg746, Glu752, Gly777, Val778, His779, Ser780, Gln820, and Glu832 each contribute to the ATP site. Mg(2+) is bound by residues Gln820, Glu832, and Asn834. Gln820, Glu832, and Asn834 together coordinate Mn(2+). Positions 930–1072 (INIPTHGSVI…QTKRHEVVHA (143 aa)) constitute an MGS-like domain. The allosteric domain stretch occupies residues 930 to 1072 (INIPTHGSVI…QTKRHEVVHA (143 aa)).

Belongs to the CarB family. As to quaternary structure, composed of two chains; the small (or glutamine) chain promotes the hydrolysis of glutamine to ammonia, which is used by the large (or ammonia) chain to synthesize carbamoyl phosphate. Tetramer of heterodimers (alpha,beta)4. The cofactor is Mg(2+). Mn(2+) is required as a cofactor.

It carries out the reaction hydrogencarbonate + L-glutamine + 2 ATP + H2O = carbamoyl phosphate + L-glutamate + 2 ADP + phosphate + 2 H(+). The catalysed reaction is hydrogencarbonate + NH4(+) + 2 ATP = carbamoyl phosphate + 2 ADP + phosphate + 2 H(+). The protein operates within amino-acid biosynthesis; L-arginine biosynthesis; carbamoyl phosphate from bicarbonate: step 1/1. It participates in pyrimidine metabolism; UMP biosynthesis via de novo pathway; (S)-dihydroorotate from bicarbonate: step 1/3. Its function is as follows. Large subunit of the glutamine-dependent carbamoyl phosphate synthetase (CPSase). CPSase catalyzes the formation of carbamoyl phosphate from the ammonia moiety of glutamine, carbonate, and phosphate donated by ATP, constituting the first step of 2 biosynthetic pathways, one leading to arginine and/or urea and the other to pyrimidine nucleotides. The large subunit (synthetase) binds the substrates ammonia (free or transferred from glutamine from the small subunit), hydrogencarbonate and ATP and carries out an ATP-coupled ligase reaction, activating hydrogencarbonate by forming carboxy phosphate which reacts with ammonia to form carbamoyl phosphate. In Bacillus cereus (strain ATCC 14579 / DSM 31 / CCUG 7414 / JCM 2152 / NBRC 15305 / NCIMB 9373 / NCTC 2599 / NRRL B-3711), this protein is Carbamoyl phosphate synthase large chain.